A 1183-amino-acid chain; its full sequence is M-phase phosphoprotein 9 (1183 aa).

Disordered stretches follow at residues 28–52, 300–334, and 472–495; these read GLNL…SGKT, KLKQ…EKSD, and ISFS…SFSQ. The span at 324–334 shows a compositional bias: basic and acidic residues; sequence QSKKTPIEKSD. The required for its centrosomal localization stretch occupies residues 401 to 800; that stretch reads TSNEMKLPSL…EAQVKQVEHE (400 aa). Residues 451–500 are interaction with CEP97; it reads KPKQQISGIQPHGLPNALDDRISFSPDSVLEPSMSSPSDIDSFSQASNVT. Residues 483-495 are compositionally biased toward low complexity; it reads SMSSPSDIDSFSQ. A coiled-coil region spans residues 609-804; that stretch reads DLRAYYESEI…KQVEHENMLS (196 aa). A Phosphoserine; by TTBK2 modification is found at Ser781. Lys784 is covalently cross-linked (Glycyl lysine isopeptide (Lys-Gly) (interchain with G-Cter in ubiquitin)). Position 788 is a phosphoserine; by TTBK2 (Ser788). The interval 801–1031 is interaction with KIF24; sequence NMLSLRHNSR…PVSTLQRTNP (231 aa). Disordered regions lie at residues 863–894 and 910–999; these read LGHR…SDTP and NWGT…GFSH. The span at 921 to 936 shows a compositional bias: polar residues; the sequence is SNINPRQTETSVNASR. Positions 949–967 are enriched in low complexity; that stretch reads LNSASQRSSSLPPSNRKSS. Residue Ser994 is modified to Phosphoserine. Residues 1109–1174 adopt a coiled-coil conformation; sequence RTLAETERFF…GSVRMTLKKF (66 aa).

In terms of assembly, interacts with CCP110, CEP97 and KIF24. Post-translationally, TTBK2-mediated phosphorylation at Ser-781 and Ser-788, promotes its ubiquitination at Lys-784 leading to proteasomal degradation, loss of MPHOSPH9 facilitates the removal of the CP110-CEP97 complex from the mother centrioles, promoting the initiation of ciliogenesis. Phosphorylated in M (mitotic) phase. Ubiquitinated at Lys-784, leading to proteasomal degradation.

Its subcellular location is the cytoplasm. The protein resides in the cytoskeleton. The protein localises to the microtubule organizing center. It localises to the centrosome. It is found in the centriole. Its subcellular location is the golgi apparatus membrane. Its function is as follows. Negatively regulates cilia formation by recruiting the CP110-CEP97 complex (a negative regulator of ciliogenesis) at the distal end of the mother centriole in ciliary cells. At the beginning of cilia formation, MPHOSPH9 undergoes TTBK2-mediated phosphorylation and degradation via the ubiquitin-proteasome system and removes itself and the CP110-CEP97 complex from the distal end of the mother centriole, which subsequently promotes cilia formation. The polypeptide is M-phase phosphoprotein 9 (MPHOSPH9) (Homo sapiens (Human)).